A 949-amino-acid polypeptide reads, in one-letter code: AP-1 complex subunit beta-1 (949 aa).

Residue K318 is modified to N6-acetyllysine. Y574 is subject to 3'-nitrotyrosine. The disordered stretch occupies residues 592 to 623; sequence SLPPRTASSESTESPEAAPAGAPASDQPDVIP. The segment covering 594–616 has biased composition (low complexity); sequence PPRTASSESTESPEAAPAGAPAS.

Belongs to the adaptor complexes large subunit family. As to quaternary structure, adaptor protein complex 1 (AP-1) is a heterotetramer composed of two large adaptins (gamma-type subunit AP1G1 and beta-type subunit AP1B1), a medium adaptin (mu-type subunit AP1M1 or AP1M2) and a small adaptin (sigma-type subunit AP1S1 or AP1S2 or AP1S3). In terms of processing, the N-terminus is blocked.

Its subcellular location is the golgi apparatus. The protein resides in the cytoplasmic vesicle. It is found in the clathrin-coated vesicle membrane. Subunit of clathrin-associated adaptor protein complex 1 that plays a role in protein sorting in the late-Golgi/trans-Golgi network (TGN) and/or endosomes. The AP complexes mediate both the recruitment of clathrin to membranes and the recognition of sorting signals within the cytosolic tails of transmembrane cargo molecules. In Rattus norvegicus (Rat), this protein is AP-1 complex subunit beta-1 (Ap1b1).